Consider the following 25-residue polypeptide: EQATLIDFGKLNADIVPDKNGGMTQ.

In terms of assembly, the flagellum consists of an outer layer composed of repeating units of FlaA around a core that contains several antigenically related polypeptides.

Its subcellular location is the periplasmic flagellum. It localises to the periplasm. Its function is as follows. Component of the outer layer of the flagella. The sequence is that of Flagellar filament outer layer protein (flaA) from Treponema phagedenis.